A 468-amino-acid chain; its full sequence is Protein phosphatase ppm-1.A (468 aa).

The interval 1-23 (MTISRADLQIASSAEPKTHGNLN) is disordered. The PPM-type phosphatase domain occupies 106–381 (RYGMSSMQGW…DNMTMVVVCF (276 aa)). Asp-145, Gly-146, Asp-329, and Asp-372 together coordinate Mn(2+).

This sequence belongs to the PP2C family. Mg(2+) serves as cofactor. The cofactor is Mn(2+). Expressed in neurons of the nerve ring and motor neurons of the ventral nerve cord.

It localises to the synapse. The enzyme catalyses O-phospho-L-seryl-[protein] + H2O = L-seryl-[protein] + phosphate. It carries out the reaction O-phospho-L-threonyl-[protein] + H2O = L-threonyl-[protein] + phosphate. Its function is as follows. Probable phosphatase which regulates axon termination in ALM and PLM neurons, and synaptic branch extension and/or stabilization in PLM neurons. Plays a role in synapse formation in GABAergic DD motor neurons probably by dephosphorylating pmk-3 thereby negatively regulating a MAP kinase pathway that includes dlk-1, mkk-4 and pmk-3. The sequence is that of Protein phosphatase ppm-1.A from Caenorhabditis elegans.